Consider the following 310-residue polypeptide: Glutaminase (310 aa).

Positions 66, 117, 161, 168, 192, 244, and 262 each coordinate substrate.

The protein belongs to the glutaminase family. Homotetramer.

The enzyme catalyses L-glutamine + H2O = L-glutamate + NH4(+). The chain is Glutaminase from Shigella boydii serotype 4 (strain Sb227).